The following is a 644-amino-acid chain: MFQDNPLLAQLKQQLHSQTPRAEGVVKATEKGFGFLEVDAQKSYFIPPPQMKKVMHGDRIIAVIHSEKERESAEPEELVEPFLTRFVGKVQGKNDRLAIVPDHPLLKDAIPCRAARGLNHEFKEGDWAVAEMRRHPLKGDRSFYAELTQYITFGDDHFVPWWVTLARHNLEKEAPDGVATEMLDEGLVREDLTALDFVTIDSASTEDMDDALFAKALPDGKLQLIVAIADPTAWIAEGSKLDKAAKIRAFTNYLPGFNIPMLPRELSDDLCSLRANEVRPVLACRMTFSTDGTIEDNIEFFAATIESKAKLVYDQVSDWLENTGDWQPESEAIAEQVRLLAQICQRRGEWRHNHALVFKDRPDYRFILGEKGEVLDIVAEPRRIANRIVEEAMIAANICAARVLRDKLGFGIYNVHMGFDPANADALAALLKTHGLHVDAEEVLTLDGFCKLRRELDAQPTGFLDSRIRRFQSFAEISTEPGPHFGLGLEAYATWTSPIRKYGDMINHRLLKAVIKGETATRPQDEITVQMAERRRLNRMAERDVGDWLYARFLKDKAGTDTRFAAEIVDISRGGMRVRLVDNGAIAFIPAPFLHAVRDELVCSQENGTVQIKGETAYKVTDVIDVTIAEVRMETRSIIARPVA.

Residues Arg-189–Lys-516 enclose the RNB domain. An S1 motif domain is found at Asp-561–Val-643.

It belongs to the RNR ribonuclease family. RNase II subfamily.

Its subcellular location is the cytoplasm. The enzyme catalyses Exonucleolytic cleavage in the 3'- to 5'-direction to yield nucleoside 5'-phosphates.. Its function is as follows. Involved in mRNA degradation. Hydrolyzes single-stranded polyribonucleotides processively in the 3' to 5' direction. In Escherichia coli O45:K1 (strain S88 / ExPEC), this protein is Exoribonuclease 2.